The sequence spans 517 residues: Ribose import ATP-binding protein RbsA (517 aa).

ABC transporter domains lie at 11–251 and 263–507; these read LEMR…VGRD and YDPG…ALAT. 43 to 50 contributes to the ATP binding site; the sequence is GENGAGKS.

This sequence belongs to the ABC transporter superfamily. Ribose importer (TC 3.A.1.2.1) family. In terms of assembly, the complex is composed of an ATP-binding protein (RbsA), two transmembrane proteins (RbsC) and a solute-binding protein (RbsB).

The protein localises to the cell inner membrane. It catalyses the reaction D-ribose(out) + ATP + H2O = D-ribose(in) + ADP + phosphate + H(+). Its function is as follows. Part of the ABC transporter complex RbsABC involved in ribose import. Responsible for energy coupling to the transport system. The protein is Ribose import ATP-binding protein RbsA of Burkholderia pseudomallei (strain K96243).